The primary structure comprises 208 residues: Uracil phosphoribosyltransferase (208 aa).

5-phospho-alpha-D-ribose 1-diphosphate contacts are provided by residues Arg-78, Arg-103, and 130 to 138 (DPMLATGGS). Uracil is bound by residues Ile-193 and 198 to 200 (GDA). Asp-199 lines the 5-phospho-alpha-D-ribose 1-diphosphate pocket.

It belongs to the UPRTase family. The cofactor is Mg(2+).

It catalyses the reaction UMP + diphosphate = 5-phospho-alpha-D-ribose 1-diphosphate + uracil. It participates in pyrimidine metabolism; UMP biosynthesis via salvage pathway; UMP from uracil: step 1/1. Its activity is regulated as follows. Allosterically activated by GTP. Catalyzes the conversion of uracil and 5-phospho-alpha-D-ribose 1-diphosphate (PRPP) to UMP and diphosphate. This is Uracil phosphoribosyltransferase from Neisseria gonorrhoeae (strain ATCC 700825 / FA 1090).